Consider the following 270-residue polypeptide: Small ribosomal subunit protein bS1m (270 aa).

The tract at residues Thr-218–Gln-250 is disordered.

The protein belongs to the bacterial ribosomal protein bS1 family.

The protein localises to the mitochondrion. The chain is Small ribosomal subunit protein bS1m (RPS1) from Marchantia polymorpha (Common liverwort).